A 325-amino-acid polypeptide reads, in one-letter code: Neural proliferation differentiation and control protein 1 (325 aa).

The N-terminal stretch at 1–34 (MATPLPPPSPRHLRLLRLLLSGLVLGAALRGAAA) is a signal peptide. A disordered region spans residues 138–175 (QGLELGLPSTPGTPTPTPHTSLGSPVSSDPVHMSPLEP). A helical transmembrane segment spans residues 182–202 (GLALVLILAFCVAGAAALSVA). Ser229 bears the Phosphoserine mark. The segment at 266–290 (EPPKELDTASSDEENEDGDFTVYEC) is disordered. Residues 275–284 (SSDEENEDGD) show a composition bias toward acidic residues.

It belongs to the NPDC1/cab-1 family. In terms of tissue distribution, strongly expressed in adult brain; especially in hippocampus, frontal lobe and temporal lobe.

The protein localises to the membrane. In terms of biological role, suppresses oncogenic transformation in neural and non-neural cells and down-regulates neural cell proliferation. Might be involved in transcriptional regulation. The sequence is that of Neural proliferation differentiation and control protein 1 (NPDC1) from Homo sapiens (Human).